The sequence spans 642 residues: Threonine--tRNA ligase (642 aa).

The TGS domain occupies 1-61 (MPVITLPDGS…EHDAQIAIIT (61 aa)). The interval 243–534 (DHRKIGKQLD…LTEEYAGFYP (292 aa)) is catalytic. Cysteine 334, histidine 385, and histidine 511 together coordinate Zn(2+).

It belongs to the class-II aminoacyl-tRNA synthetase family. Homodimer. Requires Zn(2+) as cofactor.

It localises to the cytoplasm. The enzyme catalyses tRNA(Thr) + L-threonine + ATP = L-threonyl-tRNA(Thr) + AMP + diphosphate + H(+). Catalyzes the attachment of threonine to tRNA(Thr) in a two-step reaction: L-threonine is first activated by ATP to form Thr-AMP and then transferred to the acceptor end of tRNA(Thr). Also edits incorrectly charged L-seryl-tRNA(Thr). This is Threonine--tRNA ligase from Sodalis glossinidius (strain morsitans).